The chain runs to 125 residues: Small ribosomal subunit protein uS12 (125 aa).

Residue Asp89 is modified to 3-methylthioaspartic acid. The segment at 105–125 is disordered; the sequence is AGVKDRKQARSKYGAKRPKAA. Basic residues predominate over residues 113–125; the sequence is ARSKYGAKRPKAA.

The protein belongs to the universal ribosomal protein uS12 family. As to quaternary structure, part of the 30S ribosomal subunit. Contacts proteins S8 and S17. May interact with IF1 in the 30S initiation complex.

In terms of biological role, with S4 and S5 plays an important role in translational accuracy. Functionally, interacts with and stabilizes bases of the 16S rRNA that are involved in tRNA selection in the A site and with the mRNA backbone. Located at the interface of the 30S and 50S subunits, it traverses the body of the 30S subunit contacting proteins on the other side and probably holding the rRNA structure together. The combined cluster of proteins S8, S12 and S17 appears to hold together the shoulder and platform of the 30S subunit. This Methylobacillus flagellatus (strain ATCC 51484 / DSM 6875 / VKM B-1610 / KT) protein is Small ribosomal subunit protein uS12.